The primary structure comprises 593 residues: RNA-binding protein 47 (593 aa).

The span at 1–20 (MTAEDSTAAMSSDSAAGSSA) shows a compositional bias: low complexity. Residues 1-25 (MTAEDSTAAMSSDSAAGSSAKVPEG) form a disordered region. 3 consecutive RRM domains span residues 71-149 (CEVF…CSVD), 151-233 (CRLF…WAEP), and 246-318 (KILY…LAKP). An Omega-N-methylarginine modification is found at arginine 332. Asymmetric dimethylarginine; alternate is present on residues arginine 394 and arginine 405. An omega-N-methylarginine; alternate mark is found at arginine 394 and arginine 405.

This sequence belongs to the RRM RBM47 family. In terms of assembly, homodimer. Interacts with A1CF. Interacts with APOBEC1; form an mRNA editing complex. Interacts with RBPMS.

The protein localises to the nucleus. Its subcellular location is the cytoplasm. Functionally, single-stranded RNA-binding protein that functions in a variety of RNA processes, including alternative splicing, RNA stabilization, and RNA editing. Functions as an enzyme-substrate adapter for the cytidine deaminase APOBEC1. With APOBEC1 forms an mRNA editing complex involved into cytidine to uridine editing of a variety of mRNA molecules. Through the binding of their 3'UTR, also stabilizes a variety of mRNAs and regulates the expression of genes such as the interferon alpha/beta receptor and interleukin-10. Also involved in the alternative splicing of several genes including TJP1. Binds the pre-mRNA (U)GCAUG consensus sequences in downstream intronic regions of alternative exons, regulating their exclusion and inclusion into mRNAs. Independently of its RNA-binding activity, could negatively regulate MAVS by promoting its lysosomal degradation. The sequence is that of RNA-binding protein 47 from Homo sapiens (Human).